The primary structure comprises 153 residues: ORM1-like protein 3 (153 aa).

The segment at 1–17 (MNVGTAHSEVNPNTRVM) is important for ceramide level-sensing. The Cytoplasmic portion of the chain corresponds to 1–21 (MNVGTAHSEVNPNTRVMNSRG). 2 consecutive transmembrane segments (helical) span residues 22–42 (IWLS…SIPF) and 43–63 (VSVP…MYIF). The Cytoplasmic segment spans residues 64-94 (LHTVKGTPFETPDQGKARLLTHWEQMDYGVQ). The chain crosses the membrane as a helical span at residues 95–117 (FTASRKFLTITPIVLYFLTSFYT). Topologically, residues 118 to 121 (KYDQ) are extracellular. Residues 122–142 (VHFILNTVSLMTVLIPKLPQL) form a helical membrane-spanning segment. The residue at position 137 (proline 137) is a Hydroxyproline. Over 143 to 153 (HGVRIFGINKY) the chain is Cytoplasmic.

The protein belongs to the ORM family. Ceramide-sensitive subunit of the serine palmitoyltransferase (SPT) complex, which is also composed of SPTLC1, SPTLC2/3 and SPTSSA/B. Post-translationally, when hydroxylated at Pro-137, ubiquitinated via 'Lys-48'-linkage, leading to proteasomal degradation. In endothelial cells, ORMDL3 proteasomal degradation is controlled by the sphingosine 1-phosphate receptor signaling pathway.

The protein resides in the endoplasmic reticulum membrane. Functionally, plays an essential role in the homeostatic regulation of sphingolipid de novo biosynthesis by modulating the activity of the serine palmitoyltransferase (SPT) in response to ceramide levels. When complexed to SPT, the binding of ceramides to its N-terminus stabilizes a conformation that block SPT substrate entry, hence preventing SPT catalytic activity. Through this mechanism, maintains ceramide levels at sufficient concentrations for the production of complex sphingolipids, but which prevents the accumulation of ceramides to levels that trigger apoptosis. In Mus musculus (Mouse), this protein is ORM1-like protein 3 (Ormdl3).